Here is a 1935-residue protein sequence, read N- to C-terminus: Myosin heavy chain, fast skeletal muscle (1935 aa).

In terms of domain architecture, Myosin N-terminal SH3-like spans Asp32–Pro81. A Myosin motor domain is found at Asp85–Asp779. Lys129 carries the post-translational modification N6,N6,N6-trimethyllysine. Residue Gly178 to Thr185 coordinates ATP. 2 actin-binding regions span residues Leu659–Thr681 and His761–Glu775. The region spanning Leu782–Ser811 is the IQ domain. Residues Ile812–Pro839 form a hinge region. A coiled-coil region spans residues Leu840–Glu1935. Disordered stretches follow at residues Arg1589–Ser1608 and His1902–Glu1935. The segment covering Gln1592–Asp1603 has biased composition (polar residues). 2 stretches are compositionally biased toward basic and acidic residues: residues His1902–Val1913 and Lys1924–Glu1935.

This sequence belongs to the TRAFAC class myosin-kinesin ATPase superfamily. Myosin family. As to quaternary structure, muscle myosin is a hexameric protein that consists of 2 heavy chain subunits (MHC), 2 alkali light chain subunits (MLC) and 2 regulatory light chain subunits (MLC-2).

The protein resides in the cytoplasm. It localises to the myofibril. Its function is as follows. Muscle contraction. This Cyprinus carpio (Common carp) protein is Myosin heavy chain, fast skeletal muscle.